A 432-amino-acid chain; its full sequence is Adenylosuccinate synthetase (432 aa).

GTP-binding positions include 13–19 (GDEGKGK) and 41–43 (GHT). The active-site Proton acceptor is Asp14. Residues Asp14 and Gly41 each contribute to the Mg(2+) site. Residues 14 to 17 (DEGK), 39 to 42 (NAGH), Thr130, Arg144, Gln225, Thr240, and Arg304 each bind IMP. His42 functions as the Proton donor in the catalytic mechanism. Position 300 to 306 (300 to 306 (ATTGRRR)) interacts with substrate. GTP contacts are provided by residues Arg306, 332–334 (KLD), and 415–417 (STG).

This sequence belongs to the adenylosuccinate synthetase family. Homodimer. The cofactor is Mg(2+).

It is found in the cytoplasm. It catalyses the reaction IMP + L-aspartate + GTP = N(6)-(1,2-dicarboxyethyl)-AMP + GDP + phosphate + 2 H(+). Its pathway is purine metabolism; AMP biosynthesis via de novo pathway; AMP from IMP: step 1/2. Functionally, plays an important role in the de novo pathway of purine nucleotide biosynthesis. Catalyzes the first committed step in the biosynthesis of AMP from IMP. The sequence is that of Adenylosuccinate synthetase from Sodalis glossinidius (strain morsitans).